We begin with the raw amino-acid sequence, 343 residues long: Cytoplasmic tRNA 2-thiolation protein 1 (343 aa).

The protein belongs to the TtcA family. CTU1/NCS6/ATPBD3 subfamily.

The protein resides in the cytoplasm. The protein operates within tRNA modification; 5-methoxycarbonylmethyl-2-thiouridine-tRNA biosynthesis. Its function is as follows. Plays a central role in 2-thiolation of mcm(5)S(2)U at tRNA wobble positions of tRNA(Lys), tRNA(Glu) and tRNA(Gln). Directly binds tRNAs and probably acts by catalyzing adenylation of tRNAs, an intermediate required for 2-thiolation. It is unclear whether it acts as a sulfurtransferase that transfers sulfur from thiocarboxylated URM1 onto the uridine of tRNAs at wobble position. This chain is Cytoplasmic tRNA 2-thiolation protein 1, found in Drosophila melanogaster (Fruit fly).